Consider the following 512-residue polypeptide: Maturase K (512 aa).

The protein belongs to the intron maturase 2 family. MatK subfamily.

The protein resides in the plastid. It localises to the chloroplast. Functionally, usually encoded in the trnK tRNA gene intron. Probably assists in splicing its own and other chloroplast group II introns. In Lemna gibba (Swollen duckweed), this protein is Maturase K.